The sequence spans 487 residues: MRVFNTLTDKLEEFKPINDKKVGIYACGVTVYDLCHIGHARSAVVFDVIVKYLRYKGYEVKFVKNFTDIDDKIINRANKEGVSWKEIAEKYTGEYYKDMDRLGITRADIEPKATEHINEMIEIIQTLINKGYAYEIEEGQAKSVYFSVEKFPQYGKLSKKKIDELISGARVEVDERKKSPLDFALWKASKPGEPWWDSPWGKGRPGWHIECSAMSIKYLGETFDIHGGGADLIFPHHENEIAQSEAFTGKPFAKYWIHNGFVTINKEKMSKSLGNVLNIRDLLDIYDAEALRLFLLSSHYRSPIEFAHEYIKEAEATVDRVYSTIMRIEDFEKIEINDKSSIEFDKVKAMLENLKPEFEKAMDDDFNTAKALGILFEFIKEINRFMDKKPSQNKEIDFLVTAKRAIKEIGSVLNLFQRQPVDWYRDLLKVKKIAIKEEEINRLIKERTEARKNKDWKKADSIREQLLSKGIILEDKPDRTIWKVKIN.

A Zn(2+)-binding site is contributed by C27. The 'HIGH' region signature appears at 29–39; sequence VTVYDLCHIGH. The Zn(2+) site is built by C211, H236, and E240. Residues 268 to 272 carry the 'KMSKS' region motif; it reads KMSKS. K271 is an ATP binding site.

Belongs to the class-I aminoacyl-tRNA synthetase family. As to quaternary structure, monomer. It depends on Zn(2+) as a cofactor.

Its subcellular location is the cytoplasm. It catalyses the reaction tRNA(Cys) + L-cysteine + ATP = L-cysteinyl-tRNA(Cys) + AMP + diphosphate. The protein is Cysteine--tRNA ligase of Thermodesulfovibrio yellowstonii (strain ATCC 51303 / DSM 11347 / YP87).